Consider the following 272-residue polypeptide: MGRVRNRATAQRRRRKRPGDPPAACAAIAVMGASRAQCPRVQVGVGSHAAAKRWLGKLRRKRRWRRAREAGSRDPLPSAPLPDPPAPAESPKELDLGAQRERWETFRKLWGLSCEGAAKVLLDTFEYPGLVHHTGGCHCGAVRFAVWAPADLRVVDCSCRLCRKKQHRHFLVPASRFTLLQGAESIVTYRSNTHPALHSFCSRCGVQSFHAAVSDPRVYGVAPHCLDEGTVRSVVIEEVGGGDPGEEAAEEHKAIHKTSSQSAPACPREQEQ.

Basic residues predominate over residues 1 to 17 (MGRVRNRATAQRRRRKR). 2 disordered regions span residues 1-23 (MGRV…DPPA) and 65-95 (RRAR…KELD). Positions 77-88 (PSAPLPDPPAPA) are enriched in pro residues. Residues 133 to 246 (HTGGCHCGAV…EEVGGGDPGE (114 aa)) form the CENP-V/GFA domain. Residues Cys-137, Cys-139, Cys-157, Cys-159, Cys-162, Cys-201, and Cys-204 each coordinate Zn(2+). The disordered stretch occupies residues 240–272 (GGGDPGEEAAEEHKAIHKTSSQSAPACPREQEQ).

The protein belongs to the Gfa family. Zn(2+) is required as a cofactor.

This chain is Centromere protein V-like protein 3, found in Homo sapiens (Human).